We begin with the raw amino-acid sequence, 438 residues long: Serine hydroxymethyltransferase (438 aa).

(6S)-5,6,7,8-tetrahydrofolate-binding positions include L133 and 137 to 139 (GHL). At K242 the chain carries N6-(pyridoxal phosphate)lysine.

Belongs to the SHMT family. As to quaternary structure, homodimer. It depends on pyridoxal 5'-phosphate as a cofactor.

It localises to the cytoplasm. The enzyme catalyses (6R)-5,10-methylene-5,6,7,8-tetrahydrofolate + glycine + H2O = (6S)-5,6,7,8-tetrahydrofolate + L-serine. The protein operates within one-carbon metabolism; tetrahydrofolate interconversion. Its pathway is amino-acid biosynthesis; glycine biosynthesis; glycine from L-serine: step 1/1. In terms of biological role, catalyzes the reversible interconversion of serine and glycine with tetrahydrofolate (THF) serving as the one-carbon carrier. This reaction serves as the major source of one-carbon groups required for the biosynthesis of purines, thymidylate, methionine, and other important biomolecules. Also exhibits THF-independent aldolase activity toward beta-hydroxyamino acids, producing glycine and aldehydes, via a retro-aldol mechanism. This Brucella canis (strain ATCC 23365 / NCTC 10854 / RM-666) protein is Serine hydroxymethyltransferase.